Here is a 158-residue protein sequence, read N- to C-terminus: Small ribosomal subunit protein uS7 (158 aa).

This sequence belongs to the universal ribosomal protein uS7 family. As to quaternary structure, part of the 30S ribosomal subunit. Contacts proteins S9 and S11.

One of the primary rRNA binding proteins, it binds directly to 16S rRNA where it nucleates assembly of the head domain of the 30S subunit. Is located at the subunit interface close to the decoding center, probably blocks exit of the E-site tRNA. The protein is Small ribosomal subunit protein uS7 of Wolbachia pipientis subsp. Culex pipiens (strain wPip).